The following is a 126-amino-acid chain: MDKTLKFTDSHEWVRDNGDGTVTIGISEHAQEMLGDVVFVDLPDVEDEVEAGESFSLVESVKAASDIYSPVTGEVVEINEELEDSPELINEEPYEGGWIVKVKLSDPSELDDLKDAEEYLSSIEEE.

Residues 21 to 103 (TVTIGISEHA…YEGGWIVKVK (83 aa)) form the Lipoyl-binding domain. An N6-lipoyllysine modification is found at K62.

Belongs to the GcvH family. The glycine cleavage system is composed of four proteins: P, T, L and H. (R)-lipoate serves as cofactor.

In terms of biological role, the glycine cleavage system catalyzes the degradation of glycine. The H protein shuttles the methylamine group of glycine from the P protein to the T protein. The chain is Glycine cleavage system H protein from Vibrio parahaemolyticus serotype O3:K6 (strain RIMD 2210633).